A 153-amino-acid chain; its full sequence is Xanthine-guanine phosphoribosyltransferase (153 aa).

5-phospho-alpha-D-ribose 1-diphosphate is bound by residues 37–38 (RG), arginine 69, and 88–96 (DDLVDTGGT). Position 69 (arginine 69) interacts with GMP. Position 89 (aspartate 89) interacts with Mg(2+). Aspartate 92 and isoleucine 135 together coordinate guanine. Xanthine is bound by residues aspartate 92 and isoleucine 135. Residues 92-96 (DTGGT) and 134-135 (WI) contribute to the GMP site.

The protein belongs to the purine/pyrimidine phosphoribosyltransferase family. XGPT subfamily. Homotetramer. Requires Mg(2+) as cofactor.

The protein resides in the cell inner membrane. It carries out the reaction GMP + diphosphate = guanine + 5-phospho-alpha-D-ribose 1-diphosphate. The catalysed reaction is XMP + diphosphate = xanthine + 5-phospho-alpha-D-ribose 1-diphosphate. It catalyses the reaction IMP + diphosphate = hypoxanthine + 5-phospho-alpha-D-ribose 1-diphosphate. The protein operates within purine metabolism; GMP biosynthesis via salvage pathway; GMP from guanine: step 1/1. It participates in purine metabolism; XMP biosynthesis via salvage pathway; XMP from xanthine: step 1/1. Its function is as follows. Purine salvage pathway enzyme that catalyzes the transfer of the ribosyl-5-phosphate group from 5-phospho-alpha-D-ribose 1-diphosphate (PRPP) to the N9 position of the 6-oxopurines guanine and xanthine to form the corresponding ribonucleotides GMP (guanosine 5'-monophosphate) and XMP (xanthosine 5'-monophosphate), with the release of PPi. To a lesser extent, also acts on hypoxanthine. This is Xanthine-guanine phosphoribosyltransferase from Proteus mirabilis (strain HI4320).